A 314-amino-acid polypeptide reads, in one-letter code: Epithelial-stromal interaction protein 1 (314 aa).

Disordered stretches follow at residues 1 to 72, 200 to 219, 225 to 267, and 292 to 314; these read MYPR…PNET, NRSACNIAPPAAQSSRWKLP, PSRA…HQEE, and SQPGGVEQSGGCWNMNSTDGWGI. Over residues 43 to 58 the composition is skewed to basic and acidic residues; the sequence is AEPKGPKLERQGHGDQ. Residues 71-180 adopt a coiled-coil conformation; that stretch reads ETRRQKIQRI…QEDIRRATLR (110 aa). Residues 232–267 are compositionally biased toward basic and acidic residues; the sequence is AHKDSPQKEDNQKLQKTRDGHQKNKLLETKGQHQEE. Polar residues predominate over residues 305-314; the sequence is NMNSTDGWGI.

Its function is as follows. Plays a role in M1 macrophage polarization and is required for the proper regulation of gene expression during M1 versus M2 macrophage differentiation. Might play a role in RELA/p65 and STAT1 phosphorylation and nuclear localization upon activation of macrophages. This chain is Epithelial-stromal interaction protein 1 (Epsti1), found in Rattus norvegicus (Rat).